Reading from the N-terminus, the 577-residue chain is External alternative NAD(P)H-ubiquinone oxidoreductase B1, mitochondrial (577 aa).

The N-terminal 35 residues, Met1 to Ala35, are a transit peptide targeting the mitochondrion. Arg57–Arg87 serves as a coordination point for FAD. Residue Leu221–Phe257 coordinates NAD(+). In terms of domain architecture, EF-hand spans Lys378–Arg413. Residues Asp391, Asp393, Ser395, Thr397, and Glu402 each coordinate Ca(2+). The short motif at Tyr568–Ile577 is the Microbody targeting signal element.

It belongs to the NADH dehydrogenase family. FAD serves as cofactor.

It is found in the mitochondrion inner membrane. It localises to the peroxisome. The catalysed reaction is a quinone + NADH + H(+) = a quinol + NAD(+). It catalyses the reaction a ubiquinone + NADH + H(+) = a ubiquinol + NAD(+). Its activity is regulated as follows. Activity is calcium-dependent with a more pronounced effect at higher pH. In terms of biological role, calcium-dependent NAD(P)H dehydrogenase. Binds calcium ions. Alternative NADH-ubiquinone oxidoreductase which catalyzes the oxidation of mitochondrial NADH does not translocate protons across the inner mitochondrial membrane. This Solanum tuberosum (Potato) protein is External alternative NAD(P)H-ubiquinone oxidoreductase B1, mitochondrial (NDB1).